We begin with the raw amino-acid sequence, 74 residues long: uncharacterized protein (74 aa).

A helical membrane pass occupies residues 52-72; the sequence is ITFGFTVLGLGIGMIFGDAGL.

It is found in the membrane. This is an uncharacterized protein from Methanocaldococcus jannaschii (strain ATCC 43067 / DSM 2661 / JAL-1 / JCM 10045 / NBRC 100440) (Methanococcus jannaschii).